The sequence spans 866 residues: Ribosome biogenesis protein BOP1 homolog (866 aa).

Disordered regions lie at residues 1–180 (MVAN…EETR) and 214–241 (PPEA…EEDI). Composition is skewed to acidic residues over residues 37-52 (VDDE…DEEN), 60-146 (GNDE…LEEP), and 167-179 (TAED…DEET). WD repeat units lie at residues 527–566 (GHTD…CIRT), 568–608 (PTGD…SLLV), 697–735 (KSKG…LLKK), 738–777 (PSCK…RPYQ), 781–820 (LHHS…DLLQ), and 836–866 (VNDF…RLYT).

The protein belongs to the WD repeat BOP1/ERB1 family.

It is found in the nucleus. It localises to the nucleolus. Its subcellular location is the nucleoplasm. In terms of biological role, required for maturation of ribosomal RNAs and formation of the large ribosomal subunit. In Aedes aegypti (Yellowfever mosquito), this protein is Ribosome biogenesis protein BOP1 homolog.